Reading from the N-terminus, the 310-residue chain is MVASEKSKILIIGGTGYIGKYLVETSAKSGHPTFVLIRESTLKNPQKSKLIDTFKSYGVTLLFGDISNQESLLKAIKQVDVVISTVGGQQFADQVNIINAIKEAGNIKRFLPSEFGFDVDHAHAIEPAASLFALKVKIRRMIEAEGIPYTYVICNWFADFFLPNLGHLDAKTPPRDKVVIFGDGNPKAIYVKEEDIATYTIEAVDDPRTLNKTLHMRPPANILSFNEVVSLWEEKIGKTLEKIYLSEEDILEIVKEGPLPLRTNLAICHSVFVNGDSANFEVQPPTGVEATELYPKVKYTTVDEFYNKFV.

NADP(+) contacts are provided by residues 13 to 19, arginine 38, and lysine 47; that span reads GGTGYIG. Lysine 135 serves as the catalytic Proton acceptor. An NADP(+)-binding site is contributed by arginine 139.

The protein belongs to the NmrA-type oxidoreductase family. Isoflavone reductase subfamily. As to quaternary structure, monomer.

It is found in the cytoplasm. The protein operates within alkaloid biosynthesis; nicotine biosynthesis. Its function is as follows. NADPH-binding protein. Involved in the biosynthesis of pyridine alkaloid natural products, leading mainly to the production of anabasine, anatabine, nicotine and nornicotine, effective deterrents against herbivores with antiparasitic and pesticide properties (neurotoxins); nornicotine serves as the precursor in the synthesis of the carcinogen compound N'-nitrosonornicotine (NNN). Reductase involved in a late step of tobacco alkaloid biosynthesis. Triggers either the formation of a nicotinic acid-derived precursor or the final condensation reaction of tobacco alkaloids. The polypeptide is Isoflavone reductase homolog A622 (Nicotiana glauca (Glaucous tobacco)).